An 88-amino-acid chain; its full sequence is ESSFPATFVPLPADSEGGEDEDLQCVCLKTTSGINPRHISSLEVIGAGTHCPSPQLLATKKTGRKICLDQQRPLYKKILKKLLDGDES.

A glycan (O-linked (GalNAc...) threonine) is linked at threonine 7. 2 disulfides stabilise this stretch: cysteine 25–cysteine 51 and cysteine 27–cysteine 67. Residue serine 41 is modified to Phosphoserine. Position 76-82 (76-82) interacts with heparin; that stretch reads KKILKKL.

It belongs to the intercrine alpha (chemokine CxC) family. As to quaternary structure, homotetramer. Interacts with TNFAIP6 (via Link domain). Interacts with CCR1. Interacts with CXCR3. Interacts with THBD; this interaction enhances generation of activated protein C. In terms of processing, O-linked glycan consists of Gal-GalNAc disaccharide which is modified with sialic acid residues (microheterogeneity).

The protein localises to the secreted. Its function is as follows. Chemokine released during platelet aggregation that plays a role in different biological processes including hematopoiesis, cell proliferation, differentiation, and activation. Acts via different functional receptors including CCR1, CXCR3A or CXCR3B. Upon interaction with CXCR3A receptor, induces activated T-lymphocytes migration mediated via downstream Ras/extracellular signal-regulated kinase (ERK) signaling. Neutralizes the anticoagulant effect of heparin by binding more strongly to heparin than to the chondroitin-4-sulfate chains of the carrier molecule. Plays a role in the inhibition of hematopoiesis and in the maintenance of hematopoietic stem cell (HSC) quiescence. Chemotactic for neutrophils and monocytes via CCR1. Inhibits endothelial cell proliferation. In cooperation with toll-like receptor 8/TLR8, induces chromatin remodeling and activates inflammatory gene expression via the TBK1-IRF5 axis. In addition, induces myofibroblast differentiation and collagen synthesis in different precursor cells, including endothelial cells, by stimulating endothelial-to-mesenchymal transition. Interacts with thrombomodulin/THBD to enhance the activation of protein C and thus potentiates its anticoagulant activity. The sequence is that of Platelet factor 4 (PF4) from Bos taurus (Bovine).